Here is a 210-residue protein sequence, read N- to C-terminus: Outer-membrane lipoprotein LolB (210 aa).

The signal sequence occupies residues 1 to 29 (MSLISNNEERSLRVRYCIAIALSALLISG). C30 is lipidated: N-palmitoyl cysteine. The S-diacylglycerol cysteine moiety is linked to residue C30.

The protein belongs to the LolB family. In terms of assembly, monomer.

It is found in the cell outer membrane. Its function is as follows. Plays a critical role in the incorporation of lipoproteins in the outer membrane after they are released by the LolA protein. The sequence is that of Outer-membrane lipoprotein LolB from Coxiella burnetii (strain RSA 493 / Nine Mile phase I).